Consider the following 236-residue polypeptide: 7-cyano-7-deazaguanine synthase (236 aa).

7–17 provides a ligand contact to ATP; it reads CSGGLDSVSLA. Zn(2+) is bound by residues Cys-185, Cys-193, Cys-196, and Cys-199.

It belongs to the QueC family. Zn(2+) is required as a cofactor.

The catalysed reaction is 7-carboxy-7-deazaguanine + NH4(+) + ATP = 7-cyano-7-deazaguanine + ADP + phosphate + H2O + H(+). It participates in purine metabolism; 7-cyano-7-deazaguanine biosynthesis. Catalyzes the ATP-dependent conversion of 7-carboxy-7-deazaguanine (CDG) to 7-cyano-7-deazaguanine (preQ(0)). The chain is 7-cyano-7-deazaguanine synthase from Rhizobium rhizogenes (strain K84 / ATCC BAA-868) (Agrobacterium radiobacter).